A 659-amino-acid polypeptide reads, in one-letter code: tRNA uridine 5-carboxymethylaminomethyl modification enzyme MnmG (659 aa).

Residue 13–18 (GGGHAG) coordinates FAD. An NAD(+)-binding site is contributed by 281 to 295 (GPRYCPSVEDKINRF).

It belongs to the MnmG family. Homodimer. Heterotetramer of two MnmE and two MnmG subunits. The cofactor is FAD.

It localises to the cytoplasm. In terms of biological role, NAD-binding protein involved in the addition of a carboxymethylaminomethyl (cmnm) group at the wobble position (U34) of certain tRNAs, forming tRNA-cmnm(5)s(2)U34. The chain is tRNA uridine 5-carboxymethylaminomethyl modification enzyme MnmG from Delftia acidovorans (strain DSM 14801 / SPH-1).